Reading from the N-terminus, the 65-residue chain is Large ribosomal subunit protein bL35 (65 aa).

It belongs to the bacterial ribosomal protein bL35 family.

The protein is Large ribosomal subunit protein bL35 of Nitrosomonas eutropha (strain DSM 101675 / C91 / Nm57).